Consider the following 489-residue polypeptide: Acetyl-coenzyme A carboxylase carboxyl transferase subunit beta, chloroplastic (489 aa).

Residues 222–489 (LWVQCENCYG…FFPLNSNSIK (268 aa)) enclose the CoA carboxyltransferase N-terminal domain. Zn(2+) contacts are provided by C226, C229, C245, and C248. The C4-type zinc-finger motif lies at 226–248 (CENCYGLNYKKFFRSKMNICEQC).

The protein belongs to the AccD/PCCB family. In terms of assembly, acetyl-CoA carboxylase is a heterohexamer composed of biotin carboxyl carrier protein, biotin carboxylase and 2 subunits each of ACCase subunit alpha and ACCase plastid-coded subunit beta (accD). Zn(2+) is required as a cofactor.

The protein resides in the plastid. The protein localises to the chloroplast stroma. The catalysed reaction is N(6)-carboxybiotinyl-L-lysyl-[protein] + acetyl-CoA = N(6)-biotinyl-L-lysyl-[protein] + malonyl-CoA. Its pathway is lipid metabolism; malonyl-CoA biosynthesis; malonyl-CoA from acetyl-CoA: step 1/1. Functionally, component of the acetyl coenzyme A carboxylase (ACC) complex. Biotin carboxylase (BC) catalyzes the carboxylation of biotin on its carrier protein (BCCP) and then the CO(2) group is transferred by the transcarboxylase to acetyl-CoA to form malonyl-CoA. In Buxus microphylla (Littleleaf boxwood), this protein is Acetyl-coenzyme A carboxylase carboxyl transferase subunit beta, chloroplastic.